We begin with the raw amino-acid sequence, 279 residues long: Shikimate dehydrogenase (NADP(+)) (279 aa).

Residues 17-19 (SQS) and Thr-64 each bind shikimate. Lys-68 acts as the Proton acceptor in catalysis. Residues Asn-89 and Asp-105 each coordinate shikimate. Residues 130 to 134 (GAGGA) and Leu-218 contribute to the NADP(+) site. Residue Tyr-220 coordinates shikimate. Gly-242 contributes to the NADP(+) binding site.

Belongs to the shikimate dehydrogenase family. Homodimer.

It carries out the reaction shikimate + NADP(+) = 3-dehydroshikimate + NADPH + H(+). The protein operates within metabolic intermediate biosynthesis; chorismate biosynthesis; chorismate from D-erythrose 4-phosphate and phosphoenolpyruvate: step 4/7. Involved in the biosynthesis of the chorismate, which leads to the biosynthesis of aromatic amino acids. Catalyzes the reversible NADPH linked reduction of 3-dehydroshikimate (DHSA) to yield shikimate (SA). This Methylococcus capsulatus (strain ATCC 33009 / NCIMB 11132 / Bath) protein is Shikimate dehydrogenase (NADP(+)).